Consider the following 255-residue polypeptide: Ribonuclease HII (255 aa).

The RNase H type-2 domain occupies 72–255 (AIICGIDEVG…KSFEPIKSLL (184 aa)). Residues D78, E79, and D170 each coordinate a divalent metal cation.

It belongs to the RNase HII family. The cofactor is Mn(2+). Mg(2+) serves as cofactor.

The protein localises to the cytoplasm. The enzyme catalyses Endonucleolytic cleavage to 5'-phosphomonoester.. Its function is as follows. Endonuclease that specifically degrades the RNA of RNA-DNA hybrids. This Staphylococcus aureus (strain MSSA476) protein is Ribonuclease HII.